The primary structure comprises 463 residues: A-type ATP synthase subunit B (463 aa).

It belongs to the ATPase alpha/beta chains family. Has multiple subunits with at least A(3), B(3), C, D, E, F, H, I and proteolipid K(x).

The protein resides in the cell membrane. Its function is as follows. Component of the A-type ATP synthase that produces ATP from ADP in the presence of a proton gradient across the membrane. The B chain is a regulatory subunit. The protein is A-type ATP synthase subunit B of Desulfurococcus sp. (strain SY).